A 471-amino-acid chain; its full sequence is ATP synthase subunit beta (471 aa).

156–163 is a binding site for ATP; the sequence is GGAGVGKT.

Belongs to the ATPase alpha/beta chains family. F-type ATPases have 2 components, CF(1) - the catalytic core - and CF(0) - the membrane proton channel. CF(1) has five subunits: alpha(3), beta(3), gamma(1), delta(1), epsilon(1). CF(0) has three main subunits: a(1), b(2) and c(9-12). The alpha and beta chains form an alternating ring which encloses part of the gamma chain. CF(1) is attached to CF(0) by a central stalk formed by the gamma and epsilon chains, while a peripheral stalk is formed by the delta and b chains.

The protein resides in the cell membrane. The enzyme catalyses ATP + H2O + 4 H(+)(in) = ADP + phosphate + 5 H(+)(out). Functionally, produces ATP from ADP in the presence of a proton gradient across the membrane. The catalytic sites are hosted primarily by the beta subunits. The protein is ATP synthase subunit beta of Staphylococcus carnosus (strain TM300).